We begin with the raw amino-acid sequence, 252 residues long: JmjC domain-containing protein A (252 aa).

The region spanning 103–252 is the JmjC domain; sequence PYLRNFGMLD…VSCWGKEMIM (150 aa).

This chain is JmjC domain-containing protein A (jcdA), found in Dictyostelium discoideum (Social amoeba).